The chain runs to 79 residues: Acyl carrier protein (79 aa).

The Carrier domain occupies 2–77 (SDIAERVKKI…DAVKFLEKNS (76 aa)). The residue at position 37 (Ser-37) is an O-(pantetheine 4'-phosphoryl)serine.

Belongs to the acyl carrier protein (ACP) family. Post-translationally, 4'-phosphopantetheine is transferred from CoA to a specific serine of apo-ACP by AcpS. This modification is essential for activity because fatty acids are bound in thioester linkage to the sulfhydryl of the prosthetic group.

Its subcellular location is the cytoplasm. It functions in the pathway lipid metabolism; fatty acid biosynthesis. Its function is as follows. Carrier of the growing fatty acid chain in fatty acid biosynthesis. The polypeptide is Acyl carrier protein (Methylobacterium radiotolerans (strain ATCC 27329 / DSM 1819 / JCM 2831 / NBRC 15690 / NCIMB 10815 / 0-1)).